Consider the following 588-residue polypeptide: Secreted triacylglycerol lipase LIP1 (588 aa).

The first 20 residues, M1–A20, serve as a signal peptide directing secretion. Residue S258 is the Acyl-ester intermediate of the active site. N400 carries N-linked (GlcNAc...) asparagine glycosylation.

Belongs to the type-B carboxylesterase/lipase family.

Its subcellular location is the secreted. It carries out the reaction a triacylglycerol + H2O = a diacylglycerol + a fatty acid + H(+). In terms of biological role, secreted acylglycerol lipase required for efficient utilization of saturated triglyceride lipids. Is not involved in virulence. The sequence is that of Secreted triacylglycerol lipase LIP1 from Gibberella zeae (strain ATCC MYA-4620 / CBS 123657 / FGSC 9075 / NRRL 31084 / PH-1) (Wheat head blight fungus).